A 196-amino-acid chain; its full sequence is GTP cyclohydrolase-2 (196 aa).

49–53 lines the GTP pocket; it reads RVHSE. Zn(2+)-binding residues include C54, C65, and C67. Residues Q70, 92-94, and T114 contribute to the GTP site; that span reads EGR. The active-site Proton acceptor is the D126. The active-site Nucleophile is R128. Residues T149 and K154 each coordinate GTP.

This sequence belongs to the GTP cyclohydrolase II family. Homodimer. It depends on Zn(2+) as a cofactor.

The catalysed reaction is GTP + 4 H2O = 2,5-diamino-6-hydroxy-4-(5-phosphoribosylamino)-pyrimidine + formate + 2 phosphate + 3 H(+). Its pathway is cofactor biosynthesis; riboflavin biosynthesis; 5-amino-6-(D-ribitylamino)uracil from GTP: step 1/4. Catalyzes the conversion of GTP to 2,5-diamino-6-ribosylamino-4(3H)-pyrimidinone 5'-phosphate (DARP), formate and pyrophosphate. The polypeptide is GTP cyclohydrolase-2 (Enterobacter sp. (strain 638)).